The following is a 142-amino-acid chain: HTH-type transcriptional regulator MntR (142 aa).

The region spanning Met1–Thr63 is the HTH dtxR-type domain. Asp8, Glu11, His77, Glu99, Glu102, and His103 together coordinate Mn(2+).

It belongs to the DtxR/MntR family. Homodimer.

It localises to the cytoplasm. With respect to regulation, DNA binding is strongly activated by Mn(2+). In terms of biological role, central regulator of manganese homeostasis. This chain is HTH-type transcriptional regulator MntR, found in Bacillus cytotoxicus (strain DSM 22905 / CIP 110041 / 391-98 / NVH 391-98).